Here is a 278-residue protein sequence, read N- to C-terminus: Urease accessory protein UreD (278 aa).

The protein belongs to the UreD family. As to quaternary structure, ureD, UreF and UreG form a complex that acts as a GTP-hydrolysis-dependent molecular chaperone, activating the urease apoprotein by helping to assemble the nickel containing metallocenter of UreC. The UreE protein probably delivers the nickel.

Its subcellular location is the cytoplasm. Required for maturation of urease via the functional incorporation of the urease nickel metallocenter. This chain is Urease accessory protein UreD, found in Staphylococcus aureus (strain JH1).